Consider the following 524-residue polypeptide: Phosphoenolpyruvate carboxykinase (ATP) (524 aa).

The substrate site is built by R52, Y188, and K194. Residues K194, H213, and 229–237 (GLSGTGKTT) contribute to the ATP site. Residues K194 and H213 each contribute to the Mn(2+) site. D250 lines the Mn(2+) pocket. Residues E278, R314, and T439 each contribute to the ATP site. A substrate-binding site is contributed by R314.

This sequence belongs to the phosphoenolpyruvate carboxykinase (ATP) family. Mn(2+) serves as cofactor.

The protein resides in the cytoplasm. It carries out the reaction oxaloacetate + ATP = phosphoenolpyruvate + ADP + CO2. Its pathway is carbohydrate biosynthesis; gluconeogenesis. Its function is as follows. Involved in the gluconeogenesis. Catalyzes the conversion of oxaloacetate (OAA) to phosphoenolpyruvate (PEP) through direct phosphoryl transfer between the nucleoside triphosphate and OAA. This chain is Phosphoenolpyruvate carboxykinase (ATP), found in Campylobacter jejuni subsp. jejuni serotype O:23/36 (strain 81-176).